Reading from the N-terminus, the 417-residue chain is Serine hydroxymethyltransferase 3 (417 aa).

(6S)-5,6,7,8-tetrahydrofolate-binding positions include Leu-121 and 125 to 127; that span reads GHL. Lys-229 is subject to N6-(pyridoxal phosphate)lysine. Position 354–356 (354–356) interacts with (6S)-5,6,7,8-tetrahydrofolate; it reads SPF.

It belongs to the SHMT family. In terms of assembly, homodimer. Pyridoxal 5'-phosphate serves as cofactor.

It localises to the cytoplasm. The catalysed reaction is (6R)-5,10-methylene-5,6,7,8-tetrahydrofolate + glycine + H2O = (6S)-5,6,7,8-tetrahydrofolate + L-serine. It functions in the pathway one-carbon metabolism; tetrahydrofolate interconversion. Its pathway is amino-acid biosynthesis; glycine biosynthesis; glycine from L-serine: step 1/1. In terms of biological role, catalyzes the reversible interconversion of serine and glycine with tetrahydrofolate (THF) serving as the one-carbon carrier. This reaction serves as the major source of one-carbon groups required for the biosynthesis of purines, thymidylate, methionine, and other important biomolecules. Also exhibits THF-independent aldolase activity toward beta-hydroxyamino acids, producing glycine and aldehydes, via a retro-aldol mechanism. The sequence is that of Serine hydroxymethyltransferase 3 from Pseudomonas aeruginosa (strain ATCC 15692 / DSM 22644 / CIP 104116 / JCM 14847 / LMG 12228 / 1C / PRS 101 / PAO1).